Here is a 287-residue protein sequence, read N- to C-terminus: ATP synthase gamma chain (287 aa).

The protein belongs to the ATPase gamma chain family. F-type ATPases have 2 components, CF(1) - the catalytic core - and CF(0) - the membrane proton channel. CF(1) has five subunits: alpha(3), beta(3), gamma(1), delta(1), epsilon(1). CF(0) has three main subunits: a, b and c.

The protein localises to the cell inner membrane. Functionally, produces ATP from ADP in the presence of a proton gradient across the membrane. The gamma chain is believed to be important in regulating ATPase activity and the flow of protons through the CF(0) complex. The chain is ATP synthase gamma chain from Salmonella paratyphi A (strain ATCC 9150 / SARB42).